The chain runs to 89 residues: Small ribosomal subunit protein uS15 (89 aa).

Belongs to the universal ribosomal protein uS15 family. As to quaternary structure, part of the 30S ribosomal subunit. Forms a bridge to the 50S subunit in the 70S ribosome, contacting the 23S rRNA.

One of the primary rRNA binding proteins, it binds directly to 16S rRNA where it helps nucleate assembly of the platform of the 30S subunit by binding and bridging several RNA helices of the 16S rRNA. Functionally, forms an intersubunit bridge (bridge B4) with the 23S rRNA of the 50S subunit in the ribosome. In Mycobacteroides abscessus (strain ATCC 19977 / DSM 44196 / CCUG 20993 / CIP 104536 / JCM 13569 / NCTC 13031 / TMC 1543 / L948) (Mycobacterium abscessus), this protein is Small ribosomal subunit protein uS15.